A 430-amino-acid polypeptide reads, in one-letter code: MTASLKAIDGSAELATLMHDLGRRARAAARVLALASPEQKNRALEAMERAIRAGADKILAANAEDVADANASGANSAFLDRLTLTPARVEAMAEGIAVVRGIPDPVGAVTESWQRPNGMTIERVRVPLGVVAVIYESRPNVTADAGVLCLKSGNAVILRGGSESFRSGRAIHDCLVQGLREAGLPEAAITLVPTRDRAAVGLLLGGLNGSVDVIVPRGGKSLVARVESEARVPVFAHLEGVNHVYIDRSADLDMAKSIVLNAKMRRTGVCGAAETLLIDRAAADTHLAPLVAMLIDAGCEVRGDAIVQHADARVKPATDQDWDTEYLDAVIAAKVVDDVDDAIVHIHDHGSHHTDAIVAEDAQTAAKFLGEVDSAIVLHNASTQFADGGEFGFGAEIGIATGKFHARGPVGAEQLTTFKYRIHGTGQTRP.

The protein belongs to the gamma-glutamyl phosphate reductase family.

Its subcellular location is the cytoplasm. The enzyme catalyses L-glutamate 5-semialdehyde + phosphate + NADP(+) = L-glutamyl 5-phosphate + NADPH + H(+). It participates in amino-acid biosynthesis; L-proline biosynthesis; L-glutamate 5-semialdehyde from L-glutamate: step 2/2. Catalyzes the NADPH-dependent reduction of L-glutamate 5-phosphate into L-glutamate 5-semialdehyde and phosphate. The product spontaneously undergoes cyclization to form 1-pyrroline-5-carboxylate. The sequence is that of Gamma-glutamyl phosphate reductase from Rhodopseudomonas palustris (strain HaA2).